We begin with the raw amino-acid sequence, 416 residues long: Type II methyltransferase M.PspPI (416 aa).

Positions 77–410 (YSLVELFAGA…KAIIRMLNAA (334 aa)) constitute an SAM-dependent MTase C5-type domain. Residue C149 is part of the active site.

This sequence belongs to the class I-like SAM-binding methyltransferase superfamily. C5-methyltransferase family.

It carries out the reaction a 2'-deoxycytidine in DNA + S-adenosyl-L-methionine = a 5-methyl-2'-deoxycytidine in DNA + S-adenosyl-L-homocysteine + H(+). Functionally, a methylase, recognizes the double-stranded sequence 5'-GGNCC-3', methylates C-4 on both strands, and protects the DNA from cleavage by the PspPI endonuclease. In Psychrobacter sp. (strain TA137), this protein is Type II methyltransferase M.PspPI.